Consider the following 854-residue polypeptide: Translation initiation factor IF-2 (854 aa).

2 disordered regions span residues 52-79 and 128-265; these read RQHG…RDGG and RKQE…HGFQ. Residues 61–75 show a composition bias toward polar residues; sequence SQRITLQRKTTSTLS. Composition is skewed to basic and acidic residues over residues 128 to 150 and 211 to 232; these read RKQE…RQEA and VRHD…DNKR. The span at 247–257 shows a compositional bias: basic residues; that stretch reads RGKLGRKNKKP. Positions 354–523 constitute a tr-type G domain; the sequence is KRAPVVTVMG…LLQAEVLELT (170 aa). A G1 region spans residues 363–370; sequence GHVDHGKT. 363–370 serves as a coordination point for GTP; it reads GHVDHGKT. Positions 388 to 392 are G2; sequence GITQH. Positions 409 to 412 are G3; it reads DTPG. 409–413 serves as a coordination point for GTP; sequence DTPGH. Residues 463 to 466 are G4; that stretch reads TKID. The segment at 499–501 is G5; it reads SAK.

Belongs to the TRAFAC class translation factor GTPase superfamily. Classic translation factor GTPase family. IF-2 subfamily.

It localises to the cytoplasm. Functionally, one of the essential components for the initiation of protein synthesis. Protects formylmethionyl-tRNA from spontaneous hydrolysis and promotes its binding to the 30S ribosomal subunits. Also involved in the hydrolysis of GTP during the formation of the 70S ribosomal complex. The polypeptide is Translation initiation factor IF-2 (Marinomonas sp. (strain MWYL1)).